The sequence spans 572 residues: Proline--tRNA ligase (572 aa).

The protein belongs to the class-II aminoacyl-tRNA synthetase family. ProS type 1 subfamily. As to quaternary structure, homodimer.

The protein localises to the cytoplasm. It catalyses the reaction tRNA(Pro) + L-proline + ATP = L-prolyl-tRNA(Pro) + AMP + diphosphate. In terms of biological role, catalyzes the attachment of proline to tRNA(Pro) in a two-step reaction: proline is first activated by ATP to form Pro-AMP and then transferred to the acceptor end of tRNA(Pro). As ProRS can inadvertently accommodate and process non-cognate amino acids such as alanine and cysteine, to avoid such errors it has two additional distinct editing activities against alanine. One activity is designated as 'pretransfer' editing and involves the tRNA(Pro)-independent hydrolysis of activated Ala-AMP. The other activity is designated 'posttransfer' editing and involves deacylation of mischarged Ala-tRNA(Pro). The misacylated Cys-tRNA(Pro) is not edited by ProRS. The protein is Proline--tRNA ligase of Shigella dysenteriae serotype 1 (strain Sd197).